A 100-amino-acid chain; its full sequence is Urease subunit gamma (100 aa).

It belongs to the urease gamma subunit family. Heterotrimer of UreA (gamma), UreB (beta) and UreC (alpha) subunits. Three heterotrimers associate to form the active enzyme.

Its subcellular location is the cytoplasm. It carries out the reaction urea + 2 H2O + H(+) = hydrogencarbonate + 2 NH4(+). The protein operates within nitrogen metabolism; urea degradation; CO(2) and NH(3) from urea (urease route): step 1/1. The chain is Urease subunit gamma from Methylocella silvestris (strain DSM 15510 / CIP 108128 / LMG 27833 / NCIMB 13906 / BL2).